Reading from the N-terminus, the 400-residue chain is Phosphoglycerate kinase (400 aa).

Substrate-binding positions include 21-23, R37, 60-63, R121, and R154; these read DFN and HLGR. Residues K204, E326, and 355 to 358 each bind ATP; that span reads GGDS.

Belongs to the phosphoglycerate kinase family. In terms of assembly, monomer.

The protein localises to the cytoplasm. The catalysed reaction is (2R)-3-phosphoglycerate + ATP = (2R)-3-phospho-glyceroyl phosphate + ADP. Its pathway is carbohydrate degradation; glycolysis; pyruvate from D-glyceraldehyde 3-phosphate: step 2/5. The protein is Phosphoglycerate kinase of Chloroflexus aurantiacus (strain ATCC 29366 / DSM 635 / J-10-fl).